The sequence spans 136 residues: Ig heavy chain V region XIG8 (136 aa).

A signal peptide spans 1–18 (GFGIFVIFMFFSPSCILS). The Ig-like domain maps to 19–128 (QTLQESGPGT…TAGYFEHWGQ (110 aa)).

This chain is Ig heavy chain V region XIG8, found in Xenopus laevis (African clawed frog).